A 397-amino-acid chain; its full sequence is Acetate kinase (397 aa).

Position 8 (asparagine 8) interacts with Mg(2+). Lysine 15 is an ATP binding site. Position 90 (arginine 90) interacts with substrate. Aspartate 147 acts as the Proton donor/acceptor in catalysis. Position 207 to 211 (207 to 211 (HLGAG)) interacts with ATP. Glutamate 382 contacts Mg(2+).

The protein belongs to the acetokinase family. As to quaternary structure, homodimer. Mg(2+) serves as cofactor. Mn(2+) is required as a cofactor.

The protein resides in the cytoplasm. It catalyses the reaction acetate + ATP = acetyl phosphate + ADP. It participates in metabolic intermediate biosynthesis; acetyl-CoA biosynthesis; acetyl-CoA from acetate: step 1/2. In terms of biological role, catalyzes the formation of acetyl phosphate from acetate and ATP. Can also catalyze the reverse reaction. The sequence is that of Acetate kinase from Lactiplantibacillus plantarum (strain ATCC BAA-793 / NCIMB 8826 / WCFS1) (Lactobacillus plantarum).